A 272-amino-acid polypeptide reads, in one-letter code: 2-amino-3,7-dideoxy-D-threo-hept-6-ulosonate synthase (272 aa).

Asp-33 functions as the Proton acceptor in the catalytic mechanism. 1-deoxy-D-threo-hexo-2,5-diulose 6-phosphate contacts are provided by residues 33–37 (DHGVS) and 153–155 (YPR). Tyr-153 acts as the Proton donor in catalysis. The active-site Schiff-base intermediate with substrate is Lys-184. 1-deoxy-D-threo-hexo-2,5-diulose 6-phosphate-binding positions include 209–210 (GG) and 237–238 (GR).

Belongs to the DeoC/FbaB aldolase family. ADHS subfamily. As to quaternary structure, homodecamer.

The catalysed reaction is 1-deoxy-D-threo-hexo-2,5-diulose 6-phosphate + L-aspartate 4-semialdehyde = 2,3-dioxopropyl phosphate + 2-amino-2,3,7-trideoxy-D-lyxo-hept-6-ulosonate. Its function is as follows. Catalyzes a transaldol reaction between 6-deoxy-5-ketofructose 1-phosphate (DKFP) and L-aspartate semialdehyde (ASA) with an elimination of hydroxypyruvaldehyde phosphate to yield 2-amino-3,7-dideoxy-D-threo-hept-6-ulosonate (ADH). Plays a key role in an alternative pathway of the biosynthesis of 3-dehydroquinate (DHQ), which is involved in the canonical pathway for the biosynthesis of aromatic amino acids. The chain is 2-amino-3,7-dideoxy-D-threo-hept-6-ulosonate synthase from Methanococcus maripaludis (strain C7 / ATCC BAA-1331).